The primary structure comprises 140 residues: Large ribosomal subunit protein uL16 (140 aa).

This sequence belongs to the universal ribosomal protein uL16 family. As to quaternary structure, part of the 50S ribosomal subunit.

Functionally, binds 23S rRNA and is also seen to make contacts with the A and possibly P site tRNAs. The polypeptide is Large ribosomal subunit protein uL16 (Phytoplasma mali (strain AT)).